A 545-amino-acid polypeptide reads, in one-letter code: Phenylalanine--tRNA ligase beta subunit (545 aa).

The 77-residue stretch at 270 to 346 (LEPKERLLTT…KGYGYENIKV (77 aa)) folds into the B5 domain. The Mg(2+) site is built by Asp324, Asp330, Glu333, and Asp334.

Belongs to the phenylalanyl-tRNA synthetase beta subunit family. Type 2 subfamily. Tetramer of two alpha and two beta subunits. Requires Mg(2+) as cofactor.

Its subcellular location is the cytoplasm. The enzyme catalyses tRNA(Phe) + L-phenylalanine + ATP = L-phenylalanyl-tRNA(Phe) + AMP + diphosphate + H(+). In Methanosarcina acetivorans (strain ATCC 35395 / DSM 2834 / JCM 12185 / C2A), this protein is Phenylalanine--tRNA ligase beta subunit.